The primary structure comprises 187 residues: T-cell receptor-associated transmembrane adapter 1 (187 aa).

The Extracellular portion of the chain corresponds to 1–7 (MSGSSGC). Residues 8–28 (PFFLWGLLAFLGLALVISLIF) form a helical; Signal-anchor for type III membrane protein membrane-spanning segment. The Cytoplasmic portion of the chain corresponds to 29–187 (NISHYVEKQR…LIRAKREPVI (159 aa)). S46 carries the phosphoserine modification. Y80 is subject to Phosphotyrosine. The interval 80–83 (YEQM) is interaction with PIK3R1. The segment at 117–138 (SVKGKRRRPRKQNTNVSDRGKD) is disordered.

In terms of assembly, homodimer; disulfide-linked. Interacts with CD3Z. When phosphorylated, interacts with PIK3R1. In terms of processing, phosphorylated on tyrosines upon TCR activation. As to expression, present in T-cells (at protein level).

The protein resides in the cell membrane. Its function is as follows. Stabilizes the TCR (T-cell antigen receptor)/CD3 complex at the surface of T-cells. This Mus musculus (Mouse) protein is T-cell receptor-associated transmembrane adapter 1 (Trat1).